Consider the following 330-residue polypeptide: Aspartate--ammonia ligase (330 aa).

The protein belongs to the class-II aminoacyl-tRNA synthetase family. AsnA subfamily.

It is found in the cytoplasm. It carries out the reaction L-aspartate + NH4(+) + ATP = L-asparagine + AMP + diphosphate + H(+). It participates in amino-acid biosynthesis; L-asparagine biosynthesis; L-asparagine from L-aspartate (ammonia route): step 1/1. The polypeptide is Aspartate--ammonia ligase (Haemophilus influenzae (strain 86-028NP)).